The primary structure comprises 460 residues: Cysteine--tRNA ligase (460 aa).

Position 28 (cysteine 28) interacts with Zn(2+). Positions 30-40 match the 'HIGH' region motif; sequence MTVYDYCHLGH. Zn(2+)-binding residues include cysteine 209, histidine 234, and glutamate 238. The short motif at 266–270 is the 'KMSKS' region element; the sequence is KMSKS. Lysine 269 contacts ATP.

This sequence belongs to the class-I aminoacyl-tRNA synthetase family. In terms of assembly, monomer. It depends on Zn(2+) as a cofactor.

Its subcellular location is the cytoplasm. The catalysed reaction is tRNA(Cys) + L-cysteine + ATP = L-cysteinyl-tRNA(Cys) + AMP + diphosphate. In Pseudomonas entomophila (strain L48), this protein is Cysteine--tRNA ligase.